The chain runs to 253 residues: tRNA uridine(34) hydroxylase (253 aa).

The Rhodanese domain maps to 127 to 221; sequence HGRPLVLLDT…YFEDVGGEGY (95 aa). Catalysis depends on Cys-181, which acts as the Cysteine persulfide intermediate.

It belongs to the TrhO family.

The enzyme catalyses uridine(34) in tRNA + AH2 + O2 = 5-hydroxyuridine(34) in tRNA + A + H2O. Its function is as follows. Catalyzes oxygen-dependent 5-hydroxyuridine (ho5U) modification at position 34 in tRNAs. In Xanthomonas campestris pv. campestris (strain B100), this protein is tRNA uridine(34) hydroxylase.